Consider the following 239-residue polypeptide: tRNA (guanine-N(7)-)-methyltransferase (239 aa).

S-adenosyl-L-methionine contacts are provided by Glu68, Glu93, Asp120, and Asp143. Asp143 is an active-site residue. Substrate-binding positions include Lys147, Asp180, and 217–220 (TKFE).

The protein belongs to the class I-like SAM-binding methyltransferase superfamily. TrmB family.

It carries out the reaction guanosine(46) in tRNA + S-adenosyl-L-methionine = N(7)-methylguanosine(46) in tRNA + S-adenosyl-L-homocysteine. Its pathway is tRNA modification; N(7)-methylguanine-tRNA biosynthesis. Catalyzes the formation of N(7)-methylguanine at position 46 (m7G46) in tRNA. This chain is tRNA (guanine-N(7)-)-methyltransferase, found in Vibrio cholerae serotype O1 (strain ATCC 39541 / Classical Ogawa 395 / O395).